The primary structure comprises 146 residues: Large ribosomal subunit protein uL15 (146 aa).

The segment at Met1–Thr39 is disordered.

It belongs to the universal ribosomal protein uL15 family. In terms of assembly, part of the 50S ribosomal subunit.

Its function is as follows. Binds to the 23S rRNA. The chain is Large ribosomal subunit protein uL15 from Nocardioides sp. (strain ATCC BAA-499 / JS614).